The sequence spans 77 residues: Sec-independent protein translocase protein TatA (77 aa).

Residues 1–21 form a helical membrane-spanning segment; sequence MGSFSIWHWLVVGILVLLLFG. The disordered stretch occupies residues 41 to 77; that stretch reads KGMSEDDAPTPAPKQIDAQRAPDLSATPTPTAETENR. The span at 66–77 shows a compositional bias: polar residues; that stretch reads ATPTPTAETENR.

The protein belongs to the TatA/E family. In terms of assembly, the Tat system comprises two distinct complexes: a TatABC complex, containing multiple copies of TatA, TatB and TatC subunits, and a separate TatA complex, containing only TatA subunits. Substrates initially bind to the TatABC complex, which probably triggers association of the separate TatA complex to form the active translocon.

The protein resides in the cell inner membrane. Functionally, part of the twin-arginine translocation (Tat) system that transports large folded proteins containing a characteristic twin-arginine motif in their signal peptide across membranes. TatA could form the protein-conducting channel of the Tat system. The chain is Sec-independent protein translocase protein TatA from Sphingopyxis alaskensis (strain DSM 13593 / LMG 18877 / RB2256) (Sphingomonas alaskensis).